Consider the following 453-residue polypeptide: Na(+)/H(+) antiporter NhaA (453 aa).

The next 12 helical transmembrane spans lie at 27 to 47 (FLHIEALSGVVLLLAAAAALM), 78 to 98 (LHFWVNDALMAVFFLVAGMEI), 114 to 134 (ILPIVAAIGGVCLPAIIYFSF), 143 to 163 (GWAVPTATDIAFALGILALLG), 172 to 192 (IILLSLAIIDDIIAVLIIAFF), 201 to 221 (GLVIAIAGIALVLFFQWIGFA), 222 to 242 (SAWLYILPGAIIWWGLMVTGI), 249 to 269 (VILGMMTPVLPTRTLIAPLTI), 316 to 336 (PWVAYGVMPIFAFANAGVSFA), 346 to 366 (FLIVLGVVIGLFIGKPLGIIT), 385 to 405 (WAGILLIGFLAGIGFTMSIFV), and 421 to 441 (IGVLCGSGLSALIGLGYGLIY).

Belongs to the NhaA Na(+)/H(+) (TC 2.A.33) antiporter family.

The protein localises to the cell inner membrane. The enzyme catalyses Na(+)(in) + 2 H(+)(out) = Na(+)(out) + 2 H(+)(in). Functionally, na(+)/H(+) antiporter that extrudes sodium in exchange for external protons. In Bartonella henselae (strain ATCC 49882 / DSM 28221 / CCUG 30454 / Houston 1) (Rochalimaea henselae), this protein is Na(+)/H(+) antiporter NhaA.